The sequence spans 354 residues: Gibberellin receptor GID1 (354 aa).

Positions 120–122 (HGG) match the Involved in the stabilization of the negatively charged intermediate by the formation of the oxyanion hole motif. Residues 122-123 (GS), Y134, S198, and D250 contribute to the gibberellin A3 site. Residues 122-123 (GS), Y134, and S198 contribute to the gibberellin A4 site. Residue S198 is part of the active site. Residue D296 is part of the active site. G327 is a gibberellin A3 binding site. G327 contacts gibberellin A4.

This sequence belongs to the 'GDXG' lipolytic enzyme family. As to quaternary structure, interacts with the DELLA protein SLR1 in a GA-dependent manner, resulting in subsequent SLR1 degradation.

It localises to the nucleus. Functionally, functions as a soluble gibberellin (GA) receptor. GA is an essential hormone that regulates growth and development in plants. Binds with high affinity the biologically active GAs such as GA1, GA3 and GA4, but has low or no affinity for the biologically inactive GAs. Upon GA-binding, it interacts with the DELLA protein SLR1, a repressor of GA signaling. This leads to SLR1 degradation by the proteasome, allowing the GA signaling pathway. The protein is Gibberellin receptor GID1 of Oryza sativa subsp. japonica (Rice).